The primary structure comprises 279 residues: NADPH-dependent 7-cyano-7-deazaguanine reductase (279 aa).

Residue Ile86–Ser88 coordinates substrate. Ser88 to Lys89 is an NADPH binding site. Cys187 serves as the catalytic Thioimide intermediate. Asp194 (proton donor) is an active-site residue. His226–Glu227 provides a ligand contact to substrate. Arg255 to Gly256 contributes to the NADPH binding site.

The protein belongs to the GTP cyclohydrolase I family. QueF type 2 subfamily. As to quaternary structure, homodimer.

It localises to the cytoplasm. It carries out the reaction 7-aminomethyl-7-carbaguanine + 2 NADP(+) = 7-cyano-7-deazaguanine + 2 NADPH + 3 H(+). It participates in tRNA modification; tRNA-queuosine biosynthesis. Its function is as follows. Catalyzes the NADPH-dependent reduction of 7-cyano-7-deazaguanine (preQ0) to 7-aminomethyl-7-deazaguanine (preQ1). This Pasteurella multocida (strain Pm70) protein is NADPH-dependent 7-cyano-7-deazaguanine reductase.